Reading from the N-terminus, the 1131-residue chain is Phytochrome (1131 aa).

Residues 1–30 are disordered; sequence MASNSRHTQSQSTGSNNRRSSTNTNTTTNK. The span at 9 to 29 shows a compositional bias: low complexity; sequence QSQSTGSNNRRSSTNTNTTTN. The GAF domain maps to 227-406; it reads DVGLLCDTVV…ALGLQLNMEL (180 aa). C332 is a binding site for phytochromobilin. 2 PAS domains span residues 621–692 and 755–826; these read VASE…LRGE and DYRS…TIVL. The region spanning 903-1123 is the Histidine kinase domain; it reads YIRQEIKNPL…LVNVEFPMAQ (221 aa).

Belongs to the phytochrome family. In terms of assembly, homodimer. Contains one covalently linked phytochromobilin chromophore.

Regulatory photoreceptor which exists in two forms that are reversibly interconvertible by light: the Pr form that absorbs maximally in the red region of the spectrum and the Pfr form that absorbs maximally in the far-red region. Photoconversion of Pr to Pfr induces an array of morphogenic responses, whereas reconversion of Pfr to Pr cancels the induction of those responses. Pfr controls the expression of a number of nuclear genes including those encoding the small subunit of ribulose-bisphosphate carboxylase, chlorophyll A/B binding protein, protochlorophyllide reductase, rRNA, etc. It also controls the expression of its own gene(s) in a negative feedback fashion. The polypeptide is Phytochrome (Pinus sylvestris (Scotch pine)).